The sequence spans 451 residues: MEDSLKQLSLGRDPEGAGDSQALAELQELALKWFMETQAPFILQNGALPPWFHGFITRKQTEQLLRDKALGSFLIRLSDRATGYILSYRGSDRCRHFVINQLRNRRYIISGDTQSHSTLAELVHHYQEAQLEPFKEMLTAACPRPEDNDLYDAITRGLHQTIVDPENPPATAFLTVVPDKAASPRSSPKPQVSFLHAQKSLDVSPRNLSQEESMEAPIRVSPLPEKSSSLLEESFGGPSDIIYADLRRMNQARLGLGTEGSGRHGPVPAGSQAYSPGREAQRRLSDGEQNRPDGLGPVLSGVSPDQGPTESPTSWGCSDAMGSLGATWRQEFPKLSQEAQPCSQGSSADIYEFIGTEGLLQEARDTPDQEGSTYEQIPACWGGPARAPHPGASPTYSPWVHGYKRISGTPELSEPGNTYEQIPATKSKETGRTHKPDKLRRLFFTYRKHKF.

One can recognise an SH2 domain in the interval 51-142 (WFHGFITRKQ…PFKEMLTAAC (92 aa)). 3 disordered regions span residues 180 to 232 (KAAS…SLLE), 256 to 321 (LGTE…SDAM), and 408 to 436 (GTPELSEPGNTYEQIPATKSKETGRTHKP). Residues 221-232 (SPLPEKSSSLLE) are compositionally biased toward low complexity. A compositionally biased stretch (basic and acidic residues) spans 279–291 (EAQRRLSDGEQNR). The span at 306–316 (QGPTESPTSWG) shows a compositional bias: polar residues. The segment covering 426-436 (KSKETGRTHKP) has biased composition (basic and acidic residues).

The protein is SH2 domain-containing protein 7 (SH2D7) of Homo sapiens (Human).